The following is a 197-amino-acid chain: Imidazoleglycerol-phosphate dehydratase (197 aa).

This sequence belongs to the imidazoleglycerol-phosphate dehydratase family.

The protein resides in the cytoplasm. It carries out the reaction D-erythro-1-(imidazol-4-yl)glycerol 3-phosphate = 3-(imidazol-4-yl)-2-oxopropyl phosphate + H2O. It participates in amino-acid biosynthesis; L-histidine biosynthesis; L-histidine from 5-phospho-alpha-D-ribose 1-diphosphate: step 6/9. The polypeptide is Imidazoleglycerol-phosphate dehydratase (Pseudomonas aeruginosa (strain LESB58)).